Reading from the N-terminus, the 383-residue chain is Subtelomeric hrmA-associated cluster protein AFUB_078970 (383 aa).

2 disordered regions span residues 118-145 (NPVS…KDDD) and 249-318 (QATQ…SARP). Residues 119–134 (PVSEVPESPPSTVKSS) are compositionally biased toward low complexity. The Myb-like domain maps to 318–364 (PYSAAEDDILQTLVARGLAWEEIEKEFGLRFAKRTMRSLQMRWSRKL).

Myb-like domain-containing protein; part of the subtelomeric hrmA-associated cluster (HAC) containing genes that alter the hyphal surface (such as reduced total chitin or increased beta-glucan exposure) and perturb inter-hyphal interactions within the developing biofilms, resulting in a loss of vertically aligned polarized growing filaments. Consequently, this hypoxia-typic morphotype (called H-MORPH) with altered biofilm architecture leads to increased hypoxia fitness, increased host inflammation, rapid disease progression, and mortality in a murine model of invasive aspergillosis. The chain is Subtelomeric hrmA-associated cluster protein AFUB_078970 from Aspergillus fumigatus (strain CBS 144.89 / FGSC A1163 / CEA10) (Neosartorya fumigata).